A 76-amino-acid chain; its full sequence is Omega/Kappa-hexatoxin-Hv1h (76 aa).

The signal sequence occupies residues 1–22 (MNTATGFIVLLVLATILGGIEA). A propeptide spanning residues 23–35 (GESHMRKDAMGRV) is cleaved from the precursor. Cystine bridges form between Cys-40–Cys-55, Cys-47–Cys-60, and Cys-54–Cys-74.

The protein belongs to the neurotoxin 08 (Shiva) family. 02 (omega/kappa toxin) subfamily. Expressed by the venom gland.

It localises to the secreted. In terms of biological role, toxin that may inhibit ion channels. The polypeptide is Omega/Kappa-hexatoxin-Hv1h (Hadronyche versuta (Blue mountains funnel-web spider)).